A 387-amino-acid chain; its full sequence is Lymphocyte transmembrane adapter 1 (387 aa).

Residues 1-37 lie on the Extracellular side of the membrane; sequence MDVTTSAWSETTRRISEPSTLQGTLGSLDKAEDHSSS. A helical; Signal-anchor for type III membrane protein transmembrane segment spans residues 38 to 58; that stretch reads IFSGFAALLAILLVVAVICVL. Over 59 to 387 the chain is Cytoplasmic; sequence WCCGKRKKRQ…VCAAEAGARG (329 aa). Positions 114 to 136 are disordered; sequence VSTESLLSRNSDSPSSEHVPSRA. Residues 118–129 are compositionally biased toward low complexity; it reads SLLSRNSDSPSS. A Phosphotyrosine modification is found at Tyr-195. The tract at residues 230-268 is disordered; the sequence is SEEIDEGCGNASDCTSLGSPGTENSDPLSDGEGSSQTSN. A compositionally biased stretch (polar residues) spans 241–268; that stretch reads SDCTSLGSPGTENSDPLSDGEGSSQTSN. Tyr-270 and Tyr-296 each carry phosphotyrosine. Residues 294–387 are disordered; that stretch reads RDYENVPPGP…VCAAEAGARG (94 aa). Basic and acidic residues predominate over residues 319-329; sequence DHVEGRTDGPE. Positions 360–369 are enriched in acidic residues; it reads PWEDAEETSS. Position 375 is a phosphotyrosine (Tyr-375).

As to quaternary structure, when phosphorylated, interacts with GRB2, PIK3R1 and GRAP2. In terms of processing, phosphorylated on tyrosines upon TCR or BCR activation; which leads to the recruitment of GRB2, PIK3R1 and GRAP2.

Its subcellular location is the cell membrane. Negatively regulates TCR (T-cell antigen receptor)-mediated signaling in T-cells and BCR (B-cell antigen receptor)-mediated signaling in B-cells. This Bos taurus (Bovine) protein is Lymphocyte transmembrane adapter 1 (LAX1).